The following is a 76-amino-acid chain: MKLINLVPVFFVLIIVVDYCHSLPFFLLSLIPSAISAIKKIGKRSVESQRYVDLNRRDLEQDLQELQDFLDQISEH.

Residues 1–22 form the signal peptide; the sequence is MKLINLVPVFFVLIIVVDYCHS. Isoleucine amide is present on isoleucine 41. Residues 42–76 constitute a propeptide that is removed on maturation; it reads GKRSVESQRYVDLNRRDLEQDLQELQDFLDQISEH.

The protein belongs to the non-disulfide-bridged peptide (NDBP) superfamily. Short antimicrobial peptide (group 4) family. Expressed by the venom gland.

Its subcellular location is the secreted. It localises to the target cell membrane. In terms of biological role, antimicrobial peptide with potent activity against Gram-positive bacteria S.aureus (MIC=2.5 uM) and S.agalactiaea (MIC=2.5 uM), and Gram-negative bacteria E.coli (MIC=24 uM) and P.aeruginosa (MIC=2.5 uM), as well as against yeasts Candida albicans (MIC=6.25 uM) and C.glabrata (MIC&gt;50 uM). Also elicits high hemolysis on human erythrocytes (HC(50)=9.2 uM). The polypeptide is VpAmp1.0 (Mesomexovis punctatus (Scorpion)).